The chain runs to 103 residues: Co-chaperonin GroES (103 aa).

It belongs to the GroES chaperonin family. As to quaternary structure, heptamer of 7 subunits arranged in a ring. Interacts with the chaperonin GroEL.

The protein resides in the cytoplasm. Together with the chaperonin GroEL, plays an essential role in assisting protein folding. The GroEL-GroES system forms a nano-cage that allows encapsulation of the non-native substrate proteins and provides a physical environment optimized to promote and accelerate protein folding. GroES binds to the apical surface of the GroEL ring, thereby capping the opening of the GroEL channel. This chain is Co-chaperonin GroES, found in Rippkaea orientalis (strain PCC 8801 / RF-1) (Cyanothece sp. (strain PCC 8801)).